The chain runs to 451 residues: Chromosomal replication initiator protein DnaA (451 aa).

Positions Met1–Lys73 are domain I, interacts with DnaA modulators. The tract at residues Lys73–Asn113 is domain II. The segment at Asn114–Ser330 is domain III, AAA+ region. 4 residues coordinate ATP: Gly158, Gly160, Lys161, and Thr162. A domain IV, binds dsDNA region spans residues Ser331–Asp451.

Belongs to the DnaA family. In terms of assembly, oligomerizes as a right-handed, spiral filament on DNA at oriC.

The protein localises to the cytoplasm. Its function is as follows. Plays an essential role in the initiation and regulation of chromosomal replication. ATP-DnaA binds to the origin of replication (oriC) to initiate formation of the DNA replication initiation complex once per cell cycle. Binds the DnaA box (a 9 base pair repeat at the origin) and separates the double-stranded (ds)DNA. Forms a right-handed helical filament on oriC DNA; dsDNA binds to the exterior of the filament while single-stranded (ss)DNA is stabiized in the filament's interior. The ATP-DnaA-oriC complex binds and stabilizes one strand of the AT-rich DNA unwinding element (DUE), permitting loading of DNA polymerase. After initiation quickly degrades to an ADP-DnaA complex that is not apt for DNA replication. Binds acidic phospholipids. The polypeptide is Chromosomal replication initiator protein DnaA (Alkaliphilus oremlandii (strain OhILAs) (Clostridium oremlandii (strain OhILAs))).